Here is a 559-residue protein sequence, read N- to C-terminus: Formate--tetrahydrofolate ligase (559 aa).

Threonine 68–serine 75 lines the ATP pocket.

Belongs to the formate--tetrahydrofolate ligase family.

It catalyses the reaction (6S)-5,6,7,8-tetrahydrofolate + formate + ATP = (6R)-10-formyltetrahydrofolate + ADP + phosphate. The protein operates within one-carbon metabolism; tetrahydrofolate interconversion. In Lactobacillus gasseri (strain ATCC 33323 / DSM 20243 / BCRC 14619 / CIP 102991 / JCM 1131 / KCTC 3163 / NCIMB 11718 / NCTC 13722 / AM63), this protein is Formate--tetrahydrofolate ligase.